Consider the following 273-residue polypeptide: Large ribosomal subunit protein uL2 (273 aa).

Disordered regions lie at residues 30-50 and 221-273; these read YAPL…GRIT and RGTA…RRGK. The segment covering 253–273 has biased composition (basic residues); that stretch reads KGKKTRHNKRTDKFIVRRRGK.

Belongs to the universal ribosomal protein uL2 family. Part of the 50S ribosomal subunit. Forms a bridge to the 30S subunit in the 70S ribosome.

One of the primary rRNA binding proteins. Required for association of the 30S and 50S subunits to form the 70S ribosome, for tRNA binding and peptide bond formation. It has been suggested to have peptidyltransferase activity; this is somewhat controversial. Makes several contacts with the 16S rRNA in the 70S ribosome. The sequence is that of Large ribosomal subunit protein uL2 from Pasteurella multocida (strain Pm70).